The sequence spans 2382 residues: Serine/threonine-protein kinase WNK1 (2382 aa).

Disordered regions lie at residues 1 to 81 (MSGG…RFFR) and 95 to 203 (LPGL…QQDD). 2 positions are modified to phosphoserine: Ser-15 and Ser-19. Positions 50–66 (RTEEYRRRRHTMDKDSR) are enriched in basic and acidic residues. Position 60 is a phosphothreonine (Thr-60). Composition is skewed to low complexity over residues 95 to 108 (LPGL…PSIP) and 125 to 153 (VTAT…GPAP). Phosphoserine is present on residues Ser-167 and Ser-174. The Protein kinase domain occupies 221-479 (LKFDIEIGRG…IKDLLNHAFF (259 aa)). Residue Ser-231 participates in ATP binding. Positions 283 and 299 each coordinate chloride. ATP contacts are provided by residues 301 to 304 (TELM) and Lys-351. Asp-368 functions as the Proton acceptor in the catalytic mechanism. Positions 369 and 371 each coordinate chloride. Phosphoserine; by autocatalysis occurs at positions 378 and 382. The interval 488–555 (ELAEEDDGEK…VCEGDHKTMA (68 aa)) is autoinhibitory domain. Residues 573-588 (QLVREEQEKKKQEESS) show a composition bias toward basic and acidic residues. 3 disordered regions span residues 573–779 (QLVR…QPQA), 1018–1041 (QPGG…STQG), and 1053–1119 (VAQT…SRPK). The span at 598–614 (ASQTGIKQLPSASTGIP) shows a compositional bias: polar residues. Low complexity predominate over residues 615-625 (TASTTSASVST). Positions 628-638 (EPEEPEADQHQ) are interaction with KLHL3. Residues 637-689 (HQQLQYQQPSISVLSDGTVDSGQGSSVFTESRVSSQQTVSYGSQHEQAHSTGT) are compositionally biased toward polar residues. Over residues 709 to 779 (PPSSVAQGQS…TAQPVSQPQA (71 aa)) the composition is skewed to low complexity. Polar residues predominate over residues 1025–1041 (QAPTTSSQQAVLESTQG). Residues 1053–1077 (VAQTQATQPTTLASSVDSAHSDVAS) are compositionally biased toward low complexity. The segment covering 1080-1090 (SDGNENVPSSS) has biased composition (polar residues). Residues 1098 to 1119 (TKRHYRKSVRSRSRHEKTSRPK) show a composition bias toward basic residues. An RFXV motif 1 motif is present at residues 1257 to 1260 (RFIV). Ser-1261 carries the phosphoserine modification. Low complexity-rich tracts occupy residues 1457 to 1467 (SASAGGSTATP) and 1733 to 1745 (QVST…TSGV). 2 disordered regions span residues 1457–1476 (SASA…AVVS) and 1733–1790 (QVST…TQSQ). Thr-1848 is modified (phosphothreonine). The RFXV motif 2 motif lies at 1859–1862 (RFQV). Residues 1866 to 1948 (ADGAQKEGKN…QPTKVGRFQV (83 aa)) are disordered. Residues 1869–1884 (AQKEGKNKSEDAKSVH) are compositionally biased toward basic and acidic residues. Low complexity predominate over residues 1887–1905 (SSTSESSVLSSSSPESTLV). The span at 1927–1940 (KTTASEAKSDTGQP) shows a compositional bias: polar residues. 2 consecutive short sequence motifs (RFXV motif) follow at residues 1945-1948 (RFQV) and 1957-1960 (RFSV). 7 positions are modified to phosphoserine: Ser-1978, Ser-2002, Ser-2011, Ser-2012, Ser-2027, Ser-2029, and Ser-2032. Residues 1994 to 2003 (PKKEKPELSE) are compositionally biased toward basic and acidic residues. 2 disordered regions span residues 1994–2069 (PKKE…DIED) and 2101–2196 (LYTK…NLYS). The segment covering 2035 to 2062 (QLSSKSLPSQNLSQSLSNSFNSSYMSSD) has biased composition (low complexity). Ser-2121 carries the phosphoserine modification. Residues 2122–2134 (GRRRRPTKSKGSK) are compositionally biased toward basic residues. The span at 2135–2145 (SSRSSSLGNKS) shows a compositional bias: low complexity. Polar residues-rich tracts occupy residues 2146–2167 (PQLS…QQTL) and 2175–2196 (ESGQ…NLYS). An amphipathic alpha-helix region spans residues 2241 to 2261 (SRKGTFTDDLHKLVDNWARDA). A phosphoserine mark is found at Ser-2270 and Ser-2286. Residues 2332–2352 (PFGAQWSGTGGPAPQPLGQFQ) are disordered. A phosphoserine mark is found at Ser-2370 and Ser-2372.

Belongs to the protein kinase superfamily. Ser/Thr protein kinase family. WNK subfamily. As to quaternary structure, interacts with WNK3. Interacts with WNK4; inhibiting the activity of WNK4. Interacts with SGK1; promoting its activation. Associates with the mTORC2 complex. Interacts with UVRAG. Interacts (via amphipathic alpha-helix region) with EMC2; promoting the ER membrane protein complex assembly. Interacts with isoform 1; inhibiting isoform 1 activity. Mg(2+) serves as cofactor. Autophosphorylated at Ser-378 and Ser-382, promoting its activity. Autophosphorylation at Ser-382 is inhibited by intracellular calcium. Phosphorylation at Thr-60 increases ability to activate SGK1. In terms of processing, ubiquitinated by the BCR(KLHL3) complex, leading to its degradation. Also ubiquitinated by the BCR(KLHL2) complex. Post-translationally, may be O-glycosylated. As to expression, widely expressed, with highest levels observed in the testis, heart, kidney and skeletal muscle. In terms of tissue distribution, strong expression in dorsal root ganglia and spinal cord. This isoform is kidney-specific and specifically expressed in the distal convoluted tubule (DCT) and connecting tubule (CNT) of the nephron.

Its subcellular location is the cytoplasm. The protein localises to the nucleus. It localises to the cytoskeleton. It is found in the spindle. It catalyses the reaction L-seryl-[protein] + ATP = O-phospho-L-seryl-[protein] + ADP + H(+). The enzyme catalyses L-threonyl-[protein] + ATP = O-phospho-L-threonyl-[protein] + ADP + H(+). Its activity is regulated as follows. Activated in response to hyperosmotic stress: cell shrinkage promotes formation of a membraneless compartment that concentrates WNK1 with its substrates, OXSR1/OSR1 and STK39/SPAK. Activation requires autophosphorylation of Ser-382 and, to a lower extent, Ser-378. Autophosphorylation and subsequent activation is inhibited by increases in intracellular ionic strength: Cl(-) potently inhibits WNK1 kinase activity via direct binding. Also inhibited by K(+) ions. Inhibited by small compounds staurosporine, tyrphostin 47, as well as Src tyrosine kinase inhibitors PP1 and PP2. Its function is as follows. Serine/threonine-protein kinase component of the WNK1-SPAK/OSR1 kinase cascade, which acts as a key regulator of blood pressure and regulatory volume increase by promoting ion influx. WNK1 mediates regulatory volume increase in response to hyperosmotic stress by acting as a molecular crowding sensor, which senses cell shrinkage and mediates formation of a membraneless compartment by undergoing liquid-liquid phase separation. The membraneless compartment concentrates WNK1 with its substrates, OXSR1/OSR1 and STK39/SPAK, promoting WNK1-dependent phosphorylation and activation of downstream kinases OXSR1/OSR1 and STK39/SPAK. Following activation, OXSR1/OSR1 and STK39/SPAK catalyze phosphorylation of ion cotransporters SLC12A1/NKCC2, SLC12A2/NKCC1, SLC12A5/KCC2 and SLC12A6/KCC3, regulating their activity. Phosphorylation of Na-K-Cl cotransporters SLC12A2/NKCC1 and SLC12A2/NKCC1 promote their activation and ion influx; simultaneously, phosphorylation of K-Cl cotransporters SLC12A5/KCC2 and SLC12A6/KCC3 inhibit their activity, blocking ion efflux. Also acts as a regulator of angiogenesis in endothelial cells via activation of OXSR1/OSR1 and STK39/SPAK: activation of OXSR1/OSR1 regulates chemotaxis and invasion, while STK39/SPAK regulates endothelial cell proliferation. Also acts independently of the WNK1-SPAK/OSR1 kinase cascade by catalyzing phosphorylation of other substrates, such as SYT2, PCF11 and NEDD4L. Mediates phosphorylation of SYT2, regulating SYT2 association with phospholipids and membrane-binding. Regulates mRNA export in the nucleus by mediating phosphorylation of PCF11, thereby decreasing the association between PCF11 and POLR2A/RNA polymerase II and promoting mRNA export to the cytoplasm. Acts as a negative regulator of autophagy. Required for the abscission step during mitosis, independently of the WNK1-SPAK/OSR1 kinase cascade. May also play a role in actin cytoskeletal reorganization. Also acts as a scaffold protein independently of its protein kinase activity: negatively regulates cell membrane localization of various transporters and channels, such as SLC4A4, SLC26A6, SLC26A9, TRPV4 and CFTR. Involved in the regulation of epithelial Na(+) channel (ENaC) by promoting activation of SGK1 in a kinase-independent manner: probably acts as a scaffold protein that promotes the recruitment of SGK1 to the mTORC2 complex in response to chloride, leading to mTORC2-dependent phosphorylation and activation of SGK1. Acts as an assembly factor for the ER membrane protein complex independently of its protein kinase activity: associates with EMC2 in the cytoplasm via its amphipathic alpha-helix, and prevents EMC2 ubiquitination and subsequent degradation, thereby promoting EMC2 stabilization. Kinase-defective isoform specifically expressed in kidney, which acts as a dominant-negative regulator of the longer isoform 1. Does not directly inhibit WNK4 and has no direct effect on sodium and chloride ion transport. Down-regulates sodium-chloride cotransporter activity indirectly by inhibiting isoform 1, it associates with isoform 1 and attenuates its kinase activity. In kidney, may play an important role regulating sodium and potassium balance. The chain is Serine/threonine-protein kinase WNK1 from Homo sapiens (Human).